A 177-amino-acid polypeptide reads, in one-letter code: Chorismate pyruvate-lyase (177 aa).

Residues Met-36, Arg-78, Leu-116, and Glu-157 each contribute to the substrate site.

It belongs to the UbiC family. Monomer.

The protein resides in the cytoplasm. It carries out the reaction chorismate = 4-hydroxybenzoate + pyruvate. It participates in cofactor biosynthesis; ubiquinone biosynthesis. In terms of biological role, removes the pyruvyl group from chorismate, with concomitant aromatization of the ring, to provide 4-hydroxybenzoate (4HB) for the ubiquinone pathway. In Pectobacterium carotovorum subsp. carotovorum (strain PC1), this protein is Chorismate pyruvate-lyase.